A 630-amino-acid polypeptide reads, in one-letter code: DELLA protein DWARF8 (630 aa).

The interval 1-35 (MKREYQDAGGSGGDMGSSKDKMMAAAAGAGEQEEE) is disordered. The DELLA motif signature appears at 38-42 (DELLA). The disordered stretch occupies residues 161-222 (PIPSPVAAPS…AAPPATQASA (62 aa)). Low complexity-rich tracts occupy residues 165-176 (PVAAPSADPSTD) and 191-222 (TSSSSSSSSSMDGGRTRSSVVEAAPPATQASA). In terms of domain architecture, GRAS spans 234–623 (VDTQEAGIRL…RPLIATSAWR (390 aa)). The segment at 241–297 (IRLVHALLACAEAVQQENFSAAEALVKQIPMLASSQGGAMRKVAAYFGEALARRVYR) is leucine repeat I (LRI). The LxCxE motif signature appears at 248 to 252 (LACAE). The tract at residues 316-381 (HAHFYESCPY…GGPPSFRLTG (66 aa)) is VHIID. Residues 347-351 (VHVVD) carry the VHIID motif. The leucine repeat II (LRII) stretch occupies residues 395–427 (QVGWKLAQFAHTIRVDFQYRGLVAATLADLEPF). Residues 443-544 (IAVNSVFELH…EVYLGRQICN (102 aa)) are PFYRE. The short motif at 451 to 455 (LHRLL) is the LXXLL motif element. The SAW stretch occupies residues 547 to 623 (ACEGAERTER…RPLIATSAWR (77 aa)).

This sequence belongs to the GRAS family. DELLA subfamily. In terms of processing, phosphorylated. Ubiquitinated. Upon GA application it is ubiquitinated, leading to its subsequent degradation.

The protein resides in the nucleus. Functionally, probable transcriptional regulator that acts as a repressor of the gibberellin (GA) signaling pathway. Probably acts by participating in large multiprotein complexes that repress transcription of GA-inducible genes. Upon GA application, it is degraded by the proteasome, allowing the GA signaling pathway. The chain is DELLA protein DWARF8 (D8) from Zea mays (Maize).